A 66-amino-acid polypeptide reads, in one-letter code: Putative inactive (E)-beta-ocimene synthase, chloroplastic (66 aa).

The N-terminal 25 residues, 1–25 (MAAHNLCFNSAFVCNVHHQKTQHFP), are a transit peptide targeting the chloroplast.

The protein belongs to the terpene synthase family. Tpsb subfamily. As to expression, expressed exclusively in flowers.

The protein resides in the plastid. The protein localises to the chloroplast. The polypeptide is Putative inactive (E)-beta-ocimene synthase, chloroplastic (TPS02) (Arabidopsis thaliana (Mouse-ear cress)).